Reading from the N-terminus, the 332-residue chain is Ubiquinone biosynthesis protein COQ4, mitochondrial (332 aa).

Residues 1 to 16 (MFTVSKKSLQASRNAF) constitute a mitochondrion transit peptide. 4 residues coordinate Zn(2+): His212, Asp213, His216, and Glu228.

The protein belongs to the COQ4 family. Component of a multi-subunit COQ enzyme complex, composed of at least COQ3, COQ4, COQ5, COQ6, COQ7 and COQ9. The cofactor is Zn(2+).

The protein resides in the mitochondrion inner membrane. The enzyme catalyses a 4-hydroxy-3-methoxy-5-(all-trans-polyprenyl)benzoate + H(+) = a 2-methoxy-6-(all-trans-polyprenyl)phenol + CO2. Its pathway is cofactor biosynthesis; ubiquinone biosynthesis. Functionally, lyase that catalyzes the C1-decarboxylation of 4-hydroxy-3-methoxy-5-(all-trans-polyprenyl)benzoic acid into 2-methoxy-6-(all-trans-polyprenyl)phenol during ubiquinone biosynthesis. In Kluyveromyces lactis (strain ATCC 8585 / CBS 2359 / DSM 70799 / NBRC 1267 / NRRL Y-1140 / WM37) (Yeast), this protein is Ubiquinone biosynthesis protein COQ4, mitochondrial.